A 594-amino-acid chain; its full sequence is Aspartate--tRNA(Asp/Asn) ligase (594 aa).

E173 serves as a coordination point for L-aspartate. The interval 197–200 (QLFK) is aspartate. R219 serves as a coordination point for L-aspartate. Residues 219 to 221 (RDE) and Q228 each bind ATP. Residue H449 coordinates L-aspartate. E482 is a binding site for ATP. An L-aspartate-binding site is contributed by R489. 534-537 (GLDR) contacts ATP.

Belongs to the class-II aminoacyl-tRNA synthetase family. Type 1 subfamily. In terms of assembly, homodimer.

The protein localises to the cytoplasm. It carries out the reaction tRNA(Asx) + L-aspartate + ATP = L-aspartyl-tRNA(Asx) + AMP + diphosphate. Aspartyl-tRNA synthetase with relaxed tRNA specificity since it is able to aspartylate not only its cognate tRNA(Asp) but also tRNA(Asn). Reaction proceeds in two steps: L-aspartate is first activated by ATP to form Asp-AMP and then transferred to the acceptor end of tRNA(Asp/Asn). The chain is Aspartate--tRNA(Asp/Asn) ligase from Saccharophagus degradans (strain 2-40 / ATCC 43961 / DSM 17024).